Reading from the N-terminus, the 135-residue chain is Fatty acid-binding protein 5 (135 aa).

Ala-2 carries the post-translational modification N-acetylalanine. Position 3 is a phosphoserine (Ser-3). Residues 24–34 (KELGVGLALRK) carry the Nuclear localization signal motif. N-eicosanoyl ethanolamine contacts are provided by Cys-43 and Arg-109. Residues Cys-120 and Cys-127 are joined by a disulfide bond. (9Z,12Z)-octadecadienoate is bound at residue 129–131 (RVY). Residue Tyr-131 coordinates N-eicosanoyl ethanolamine. Tyr-131 lines the hexadecanoate pocket. Tyr-131 bears the Phosphotyrosine mark.

It belongs to the calycin superfamily. Fatty-acid binding protein (FABP) family. Monomer.

Its subcellular location is the cytoplasm. It localises to the nucleus. It is found in the synapse. The protein localises to the postsynaptic density. The protein resides in the secreted. The catalysed reaction is hexadecanoate(out) = hexadecanoate(in). The enzyme catalyses (9Z,12Z)-octadecadienoate(out) = (9Z,12Z)-octadecadienoate(in). It catalyses the reaction (9Z)-octadecenoate(out) = (9Z)-octadecenoate(in). In terms of biological role, intracellular carrier for long-chain fatty acids and related active lipids, such as endocannabinoids, that regulate the metabolism and actions of the ligands they bind. In addition to the cytosolic transport, selectively delivers specific fatty acids from the cytosol to the nucleus, wherein they activate nuclear receptors. Delivers retinoic acid to the nuclear receptor peroxisome proliferator-activated receptor delta; which promotes proliferation and survival. May also serve as a synaptic carrier of endocannabinoid at central synapses and thus controls retrograde endocannabinoid signaling. Modulates inflammation by regulating PTGES induction via NF-kappa-B activation, and prostaglandin E2 (PGE2) biosynthesis during inflammation. The sequence is that of Fatty acid-binding protein 5 from Rattus norvegicus (Rat).